A 338-amino-acid chain; its full sequence is Phosphatidate cytidylyltransferase, mitochondrial (338 aa).

It belongs to the TAM41 family. Mg(2+) is required as a cofactor.

Its subcellular location is the mitochondrion inner membrane. It carries out the reaction a 1,2-diacyl-sn-glycero-3-phosphate + CTP + H(+) = a CDP-1,2-diacyl-sn-glycerol + diphosphate. The protein operates within phospholipid metabolism; CDP-diacylglycerol biosynthesis; CDP-diacylglycerol from sn-glycerol 3-phosphate: step 3/3. Its function is as follows. Catalyzes the conversion of phosphatidic acid (PA) to CDP-diacylglycerol (CDP-DAG), an essential intermediate in the synthesis of phosphatidylglycerol, cardiolipin and phosphatidylinositol. This Danio rerio (Zebrafish) protein is Phosphatidate cytidylyltransferase, mitochondrial (tamm41).